The chain runs to 367 residues: Alanine racemase (367 aa).

The active-site Proton acceptor; specific for D-alanine is the lysine 40. Residue lysine 40 is modified to N6-(pyridoxal phosphate)lysine. Arginine 136 lines the substrate pocket. Tyrosine 263 functions as the Proton acceptor; specific for L-alanine in the catalytic mechanism. Methionine 310 contacts substrate.

The protein belongs to the alanine racemase family. Pyridoxal 5'-phosphate serves as cofactor.

The enzyme catalyses L-alanine = D-alanine. It functions in the pathway amino-acid biosynthesis; D-alanine biosynthesis; D-alanine from L-alanine: step 1/1. In terms of biological role, catalyzes the interconversion of L-alanine and D-alanine. May also act on other amino acids. The sequence is that of Alanine racemase (alr) from Streptococcus pneumoniae (strain Hungary19A-6).